The primary structure comprises 205 residues: Protein Rcp (205 aa).

It belongs to the NAD(P)-dependent epimerase/dehydratase family.

The polypeptide is Protein Rcp (rcp) (Vibrio cholerae serotype O1 (strain ATCC 39315 / El Tor Inaba N16961)).